The primary structure comprises 891 residues: Protein translocase subunit SecA (891 aa).

Residues Q83, 101–105 (GEGKT), and D489 contribute to the ATP site.

Belongs to the SecA family.

It is found in the plastid. It localises to the chloroplast stroma. The protein localises to the chloroplast thylakoid membrane. It carries out the reaction ATP + H2O + cellular proteinSide 1 = ADP + phosphate + cellular proteinSide 2.. In terms of biological role, has a central role in coupling the hydrolysis of ATP to the transfer of proteins across the thylakoid membrane. The polypeptide is Protein translocase subunit SecA (Diacronema lutheri (Unicellular marine alga)).